The chain runs to 259 residues: Imidazole glycerol phosphate synthase subunit HisF (259 aa).

Active-site residues include Asp11 and Asp130.

The protein belongs to the HisA/HisF family. As to quaternary structure, heterodimer of HisH and HisF.

The protein resides in the cytoplasm. It catalyses the reaction 5-[(5-phospho-1-deoxy-D-ribulos-1-ylimino)methylamino]-1-(5-phospho-beta-D-ribosyl)imidazole-4-carboxamide + L-glutamine = D-erythro-1-(imidazol-4-yl)glycerol 3-phosphate + 5-amino-1-(5-phospho-beta-D-ribosyl)imidazole-4-carboxamide + L-glutamate + H(+). It participates in amino-acid biosynthesis; L-histidine biosynthesis; L-histidine from 5-phospho-alpha-D-ribose 1-diphosphate: step 5/9. In terms of biological role, IGPS catalyzes the conversion of PRFAR and glutamine to IGP, AICAR and glutamate. The HisF subunit catalyzes the cyclization activity that produces IGP and AICAR from PRFAR using the ammonia provided by the HisH subunit. The chain is Imidazole glycerol phosphate synthase subunit HisF from Solidesulfovibrio magneticus (strain ATCC 700980 / DSM 13731 / RS-1) (Desulfovibrio magneticus).